The primary structure comprises 299 residues: Beta-lactamase VEB-1 (299 aa).

Positions 1–23 (MKIVKRILLVLLSLFFTIVYSNA) are cleaved as a signal peptide. Serine 68 (nucleophile; acyl-ester intermediate) is an active-site residue. A beta-lactam-binding residues include lysine 71, serine 131, and glutamate 167. Glutamate 167 (proton acceptor) is an active-site residue.

The protein belongs to the class-A beta-lactamase family.

The catalysed reaction is a beta-lactam + H2O = a substituted beta-amino acid. Inhibited by the beta-lactamase-blocking agent clavulanic acid. In terms of biological role, class A beta-lactamase which confers resistance to the beta-lactam antibiotics, including penicillins and cephalosporins, in E.coli strain JM109. Acts via hydrolysis of the beta-lactam ring. Has penicillin-, and cephalosporin-hydrolyzing activities. This chain is Beta-lactamase VEB-1, found in Pseudomonas aeruginosa.